A 578-amino-acid polypeptide reads, in one-letter code: NADPH oxidase 4 (578 aa).

Residues 1–16 are Cytoplasmic-facing; it reads MAVSWRSWLANEGVKH. The chain crosses the membrane as a helical span at residues 17 to 37; sequence LCLLIWLSLNVLLFWKTFLLY. The Extracellular segment spans residues 38–62; sequence NQGPEYYYIHQMLGLGLCLSRASAS. The 246-residue stretch at 58–303 folds into the Ferric oxidoreductase domain; that stretch reads RASASVLNLN…YCAERLYRCI (246 aa). Residues 63-83 traverse the membrane as a helical segment; it reads VLNLNCSLILLPMCRTVLAYL. Topologically, residues 84–104 are cytoplasmic; sequence RGSQKVPSRRTRRLLDKSKTL. A helical transmembrane segment spans residues 105-125; it reads HITCGVTICIFSGVHVAAHLV. Residues 126–154 are Extracellular-facing; sequence NALNFSVNYSEDFLELNAARYQNEDPRKL. Asparagine 133 carries an N-linked (GlcNAc...) asparagine glycan. The chain crosses the membrane as a helical span at residues 155 to 175; that stretch reads LFTTIPGLTGVCMVVVLFLMV. Over 176 to 188 the chain is Cytoplasmic; the sequence is TASTYAIRVSNYD. The helical transmembrane segment at 189–209 threads the bilayer; the sequence is IFWYTHNLFFVFYMLLLLHVS. Residues 210–424 lie on the Extracellular side of the membrane; the sequence is GGLLKYQTNV…SPFEESLNYE (215 aa). Residues 218 to 273 are E-loop; essential for H2O2 generating catalytic activity; sequence NVDTHPPGCISLNQTSSQNMSIPDYVSEHFHGSLPRGFSKLEDRYQKTLVKICLEE. The N-linked (GlcNAc...) asparagine glycan is linked to asparagine 230. The mediates interaction with TLR4 stretch occupies residues 248-575; it reads HGSLPRGFSK…YGTKFEYNKE (328 aa). An FAD-binding FR-type domain is found at 304–419; it reads RSNKPVTIIS…DGPFGSPFEE (116 aa). A helical transmembrane segment spans residues 425-445; sequence VSLCVAGGIGVTPFASILNTL. Topologically, residues 446 to 578 are cytoplasmic; the sequence is LDDWKPYKLR…KFEYNKESFS (133 aa).

In terms of assembly, interacts with, relocalizes and stabilizes CYBA/p22phox. Interacts with TLR4. Interacts with protein disulfide isomerase. Interacts with PPP1R15A. Interacts with LRRC8A; this interaction prevents the ubiquitin-mediated degradation of LRRC8A. It depends on heme as a cofactor. Post-translationally, N-glycosylation is required for the function. In terms of tissue distribution, EXpressed in brain, in all layers of the cerebellum, in pyramidal cells of the Ammon horn and in Purkinje cells (at protein level). Expressed in osteoclasts, leukocytes, kidney, liver and lung.

It localises to the cytoplasm. It is found in the endoplasmic reticulum membrane. Its subcellular location is the cell membrane. The protein resides in the cell junction. The protein localises to the focal adhesion. It localises to the nucleus. The enzyme catalyses NADPH + 2 O2 = 2 superoxide + NADP(+) + H(+). The catalysed reaction is NADPH + O2 + H(+) = H2O2 + NADP(+). Activated by insulin. Inhibited by diphenylene iodonium. Inhibited by plumbagin. Activated by phorbol 12-myristate 13-acetate (PMA). Its function is as follows. NADPH oxidase that catalyzes predominantly the reduction of oxygen to H2O2. Can also catalyze to a smaller extent, the reduction of oxygen to superoxide. May function as an oxygen sensor regulating the KCNK3/TASK-1 potassium channel and HIF1A activity. May regulate insulin signaling cascade. May play a role in apoptosis, bone resorption and lipolysaccharide-mediated activation of NFKB. May produce superoxide in the nucleus and play a role in regulating gene expression upon cell stimulation. Promotes ferroptosis, reactive oxygen species production and reduced glutathione (GSH) levels by activating NLRP3 inflammasome activation and cytokine release. The protein is NADPH oxidase 4 (Nox4) of Mus musculus (Mouse).